The following is a 243-amino-acid chain: 23S rRNA (guanosine-2'-O-)-methyltransferase RlmB (243 aa).

The S-adenosyl-L-methionine site is built by Gly-196, Ile-216, and Leu-225.

It belongs to the class IV-like SAM-binding methyltransferase superfamily. RNA methyltransferase TrmH family. RlmB subfamily. Homodimer.

It is found in the cytoplasm. It catalyses the reaction guanosine(2251) in 23S rRNA + S-adenosyl-L-methionine = 2'-O-methylguanosine(2251) in 23S rRNA + S-adenosyl-L-homocysteine + H(+). Specifically methylates the ribose of guanosine 2251 in 23S rRNA. The chain is 23S rRNA (guanosine-2'-O-)-methyltransferase RlmB from Salmonella typhi.